Reading from the N-terminus, the 598-residue chain is Elongation factor 4 (598 aa).

The 183-residue stretch at 4–186 (INIRNFAIIA…AIVSRLPAPS (183 aa)) folds into the tr-type G domain. Residues 16-21 (DHGKST) and 133-136 (NKID) contribute to the GTP site.

The protein belongs to the TRAFAC class translation factor GTPase superfamily. Classic translation factor GTPase family. LepA subfamily.

The protein resides in the cell inner membrane. It carries out the reaction GTP + H2O = GDP + phosphate + H(+). Functionally, required for accurate and efficient protein synthesis under certain stress conditions. May act as a fidelity factor of the translation reaction, by catalyzing a one-codon backward translocation of tRNAs on improperly translocated ribosomes. Back-translocation proceeds from a post-translocation (POST) complex to a pre-translocation (PRE) complex, thus giving elongation factor G a second chance to translocate the tRNAs correctly. Binds to ribosomes in a GTP-dependent manner. This chain is Elongation factor 4, found in Ehrlichia ruminantium (strain Welgevonden).